The sequence spans 1771 residues: Myosin-H heavy chain (1771 aa).

Residues 7 to 57 enclose the Myosin N-terminal SH3-like domain; that stretch reads CGKEKVWVPNPEKGWINGDLIKEIPGEGWLVRDENGKEIKIEKDELRMQNP. Positions 61-840 constitute a Myosin motor domain; the sequence is EGIDDMTSLS…IIANLELLRS (780 aa). 154-161 contributes to the ATP binding site; the sequence is GESGAGKT. The segment at 690-712 is actin-binding; sequence LNSLMTTINSTNPHYIRCIKPNT. 3 consecutive IQ domains span residues 843-872, 866-895, and 940-969; these read MINS…SSIY, TKHS…ENSA, and RIKK…EAKS. Disordered regions lie at residues 1070–1176, 1218–1282, and 1312–1343; these read EKQH…NNVD, VKKS…PINM, and LNNG…KHIQ. The segment covering 1077–1111 has biased composition (polar residues); sequence YKNNEVVGNTSFEGSTTTNNGVTSPPKSSPASPIR. A compositionally biased stretch (low complexity) spans 1112–1139; that stretch reads NSINSNSDTTISGSSDDSIDNTDSLILS. Over residues 1143 to 1153 the composition is skewed to basic and acidic residues; that stretch reads HKGEDRKRNHE. The stretch at 1180–1224 forms a coiled coil; the sequence is RRQFNELEKEYKELKQMDETHKQYIESLKLQITQLEEKVKKSSSH. The segment covering 1253 to 1281 has biased composition (low complexity); that stretch reads NSSSHHQQQQQQHNISPSNSITSTTSPIN. The Dilute domain maps to 1427 to 1695; the sequence is TGVLDPIETN…LTSLMDSPKY (269 aa).

The protein belongs to the TRAFAC class myosin-kinesin ATPase superfamily. Myosin family. As to quaternary structure, myosin I heavy chain is single-headed. Dimer of a heavy and a light chain. Inability to self-assemble into filaments.

Myosin is a protein that binds to actin and has ATPase activity that is activated by actin. This is Myosin-H heavy chain (myoH) from Dictyostelium discoideum (Social amoeba).